Here is a 197-residue protein sequence, read N- to C-terminus: Class A basic helix-loop-helix protein 15 (197 aa).

Positions 1–12 (MKTKNRPPRRRT) are enriched in basic residues. 2 disordered regions span residues 1-82 (MKTK…ERER) and 178-197 (QPQG…REGS). Phosphothreonine occurs at positions 12 and 25. The segment covering 65–82 (GRRENSVQRRLESNERER) has biased composition (basic and acidic residues). Residues 72-124 (QRRLESNERERQRMHKLNNAFQALREVIPHVRADKKLSKIETLTLAKNYIKSL) form the bHLH domain.

Forms homodimers or heterodimers with TCF3 gene products E12 and E47. These dimers bind to the E-box site, however, heterodimer with MYOD1 does not bind target DNA. As to expression, expressed in pancreatic tissue only in acinar cells. There is a complete absence of expression in intra- or interlobular pancreatic ducts and in all islet cells.

The protein resides in the nucleus. In terms of biological role, plays a role in controlling the transcriptional activity of MyoD, ensuring that expanding myoblast populations remain undifferentiated. Repression may occur through muscle-specific E-box occupancy by homodimers. May also negatively regulate bHLH-mediated transcription through an N-terminal repressor domain. Serves as a key regulator of acinar cell function, stability, and identity. Also required for normal organelle localization in exocrine cells and for mitochondrial calcium ion transport. May function as a unique regulator of gene expression in several different embryonic and postnatal cell lineages. Binds to the E-box consensus sequence 5'-CANNTG-3'. In Mus musculus (Mouse), this protein is Class A basic helix-loop-helix protein 15 (Bhlha15).